Here is a 40-residue protein sequence, read N- to C-terminus: MADTTGRIPLWIIGTVAGILVIGLIGIFFYGSYSGLGSSL.

The chain crosses the membrane as a helical span at residues 8-28 (IPLWIIGTVAGILVIGLIGIF).

It belongs to the PsbJ family. PSII is composed of 1 copy each of membrane proteins PsbA, PsbB, PsbC, PsbD, PsbE, PsbF, PsbH, PsbI, PsbJ, PsbK, PsbL, PsbM, PsbT, PsbX, PsbY, PsbZ, Psb30/Ycf12, at least 3 peripheral proteins of the oxygen-evolving complex and a large number of cofactors. It forms dimeric complexes.

Its subcellular location is the plastid. The protein localises to the chloroplast thylakoid membrane. Functionally, one of the components of the core complex of photosystem II (PSII). PSII is a light-driven water:plastoquinone oxidoreductase that uses light energy to abstract electrons from H(2)O, generating O(2) and a proton gradient subsequently used for ATP formation. It consists of a core antenna complex that captures photons, and an electron transfer chain that converts photonic excitation into a charge separation. The sequence is that of Photosystem II reaction center protein J from Nicotiana sylvestris (Wood tobacco).